The primary structure comprises 99 residues: U1-theraphotoxin-Lsp1a (99 aa).

A signal peptide spans 1–23; sequence MRSLTLAALLLCSLLLVFHTSAA. Residues 24 to 50 constitute a propeptide that is removed on maturation; that stretch reads AELEAQEGHLMIPGDTDTALETVDDER. Disulfide bonds link cysteine 54–cysteine 67, cysteine 58–cysteine 91, cysteine 72–cysteine 74, and cysteine 85–cysteine 96.

The protein belongs to the neurotoxin 12 (Hwtx-2) family. 04 (lasiotoxin) subfamily. As to expression, expressed by the venom gland.

Its subcellular location is the secreted. Toxin that causes irreversible contractile paralysis into adult Aedes aegypti resulting in 100% mortality after 24 hours. The sequence is that of U1-theraphotoxin-Lsp1a from Lasiodora sp. (strain IBSP 8539) (Brazilian salmon pink birdeater).